The following is a 339-amino-acid chain: Tetraacyldisaccharide 4'-kinase (339 aa).

62 to 69 (VAGGTGKT) contacts ATP.

Belongs to the LpxK family.

It carries out the reaction a lipid A disaccharide + ATP = a lipid IVA + ADP + H(+). The protein operates within glycolipid biosynthesis; lipid IV(A) biosynthesis; lipid IV(A) from (3R)-3-hydroxytetradecanoyl-[acyl-carrier-protein] and UDP-N-acetyl-alpha-D-glucosamine: step 6/6. Its function is as follows. Transfers the gamma-phosphate of ATP to the 4'-position of a tetraacyldisaccharide 1-phosphate intermediate (termed DS-1-P) to form tetraacyldisaccharide 1,4'-bis-phosphate (lipid IVA). The protein is Tetraacyldisaccharide 4'-kinase of Xylella fastidiosa (strain M12).